A 138-amino-acid polypeptide reads, in one-letter code: uncharacterized protein (138 aa).

The disordered stretch occupies residues 1 to 73; the sequence is MCSAGQLLGG…NHTGEPVGDD (73 aa). Positions 7–18 are enriched in gly residues; that stretch reads LLGGGGGGGGSG. Over residues 19–29 the composition is skewed to basic and acidic residues; sequence GERDEDRDALA. Positions 30–43 are enriched in low complexity; it reads ERAAAGTEQESGAS. A helical transmembrane segment spans residues 106 to 126; that stretch reads VIVIFFWVMLWFLGLPAFGLV.

Belongs to the FAM241 family.

The protein localises to the membrane. This is an uncharacterized protein from Bos taurus (Bovine).